The sequence spans 90 residues: ESAT-6-like protein EsxE (90 aa).

It belongs to the WXG100 family. ESAT-6 subfamily.

It localises to the secreted. The polypeptide is ESAT-6-like protein EsxE (Mycobacterium tuberculosis (strain CDC 1551 / Oshkosh)).